A 517-amino-acid chain; its full sequence is Type II methyltransferase M.CeqI (517 aa).

Disordered stretches follow at residues 1–21 and 33–62; these read MVVTSSAGCASRPRGRGRWPR and GRPRRPFLRPTVPGPTSARPRRGRAPHGRS. The span at 51-62 shows a compositional bias: basic residues; the sequence is RPRRGRAPHGRS. TPR repeat units follow at residues 283–316, 361–394, and 476–509; these read AEFYFRLGESYFAHHQYTFAVSYLEQAIDLFENN, ALLLRALGLNRVRQRKLYEAEMYFAEALTIGDHS, and SELAEEIAEYYKQQSLLEKAFYYMKEALHYRTNM.

It catalyses the reaction a 2'-deoxyadenosine in DNA + S-adenosyl-L-methionine = an N(6)-methyl-2'-deoxyadenosine in DNA + S-adenosyl-L-homocysteine + H(+). Functionally, a methylase, recognizes the double-stranded sequence 5'-GATATC-3', methylates A-? on both strands, and protects the DNA from cleavage by the CeqI endonuclease. The polypeptide is Type II methyltransferase M.CeqI (ceqIM) (Rhodococcus hoagii (Corynebacterium equii)).